Reading from the N-terminus, the 228-residue chain is Small ribosomal subunit protein uS3 (228 aa).

In terms of domain architecture, KH type-2 spans 39-107; sequence VREFIRERLK…PVHINIEEIR (69 aa).

This sequence belongs to the universal ribosomal protein uS3 family. Part of the 30S ribosomal subunit. Forms a tight complex with proteins S10 and S14.

Binds the lower part of the 30S subunit head. Binds mRNA in the 70S ribosome, positioning it for translation. The sequence is that of Small ribosomal subunit protein uS3 from Halorhodospira halophila (strain DSM 244 / SL1) (Ectothiorhodospira halophila (strain DSM 244 / SL1)).